The chain runs to 476 residues: MNFETVIGLEVHVELKTKSKIFSSSPNAFGAPPNTQTNVIDLGYPGVLPVLNRQAVEFAMKAAMALNCEIATETKFDRKNYFYPDNPKAYQISQYDQPLGRNGWIEIEVNGKKKKIGITRIHLEEDAGKLTHTGDGYSLVDFNRQGTPLIEIVSEPDIRSPEEAYAYLEKLKAIIQYTGVSDCKMEEGSLRCDANISLRPLGSDKFGTKTELKNLNSFNFVRMGLEYEAKRQEKILLSGGVIRQETRRFDEATKTTVLMRVKEGSEDYRYFPEPDLVMLYIDDEWKERVRASIPELPDARRKRYIEEWGLPEYDAKVLTLTKEMADFFEATVANGADPKLASNWLMVEVSGYLNAEQKELHDIALTPESLAGMIKLIQNGTISSKIAKKVFKELVEHGGDPEKIVKEKGLVQISDEGALRKIVLEVLDANPQSVEDYKNGKDRALGFLVGQVMKATKGQANPPLVNKLLVEEIGKR.

The protein belongs to the GatB/GatE family. GatB subfamily. As to quaternary structure, heterotrimer of A, B and C subunits.

The catalysed reaction is L-glutamyl-tRNA(Gln) + L-glutamine + ATP + H2O = L-glutaminyl-tRNA(Gln) + L-glutamate + ADP + phosphate + H(+). It catalyses the reaction L-aspartyl-tRNA(Asn) + L-glutamine + ATP + H2O = L-asparaginyl-tRNA(Asn) + L-glutamate + ADP + phosphate + 2 H(+). Allows the formation of correctly charged Asn-tRNA(Asn) or Gln-tRNA(Gln) through the transamidation of misacylated Asp-tRNA(Asn) or Glu-tRNA(Gln) in organisms which lack either or both of asparaginyl-tRNA or glutaminyl-tRNA synthetases. The reaction takes place in the presence of glutamine and ATP through an activated phospho-Asp-tRNA(Asn) or phospho-Glu-tRNA(Gln). This chain is Aspartyl/glutamyl-tRNA(Asn/Gln) amidotransferase subunit B, found in Geobacillus kaustophilus (strain HTA426).